The following is a 548-amino-acid chain: Chaperonin GroEL (548 aa).

ATP-binding positions include 30 to 33 (TLGP), Lys51, 87 to 91 (DGTTT), Gly415, 479 to 481 (NAA), and Asp495.

This sequence belongs to the chaperonin (HSP60) family. Forms a cylinder of 14 subunits composed of two heptameric rings stacked back-to-back. Interacts with the co-chaperonin GroES.

Its subcellular location is the cytoplasm. The catalysed reaction is ATP + H2O + a folded polypeptide = ADP + phosphate + an unfolded polypeptide.. In terms of biological role, together with its co-chaperonin GroES, plays an essential role in assisting protein folding. The GroEL-GroES system forms a nano-cage that allows encapsulation of the non-native substrate proteins and provides a physical environment optimized to promote and accelerate protein folding. In Klebsiella aerogenes (strain ATCC 13048 / DSM 30053 / CCUG 1429 / JCM 1235 / KCTC 2190 / NBRC 13534 / NCIMB 10102 / NCTC 10006 / CDC 819-56) (Enterobacter aerogenes), this protein is Chaperonin GroEL.